The primary structure comprises 206 residues: IMPACT family member HI_0722 (206 aa).

This sequence belongs to the IMPACT family.

In Haemophilus influenzae (strain ATCC 51907 / DSM 11121 / KW20 / Rd), this protein is IMPACT family member HI_0722.